The primary structure comprises 223 residues: HTH-type transcriptional dual regulator CecR (223 aa).

The 60-residue stretch at 11-70 folds into the HTH tetR-type domain; the sequence is EQAKKQLIAAALAQFGEYGMNATTREIAAQAGQNIAAITYYFGSKEDLYLACAQWIADFI. Positions 33–52 form a DNA-binding region, H-T-H motif; it reads TTREIAAQAGQNIAAITYYF.

It localises to the cytoplasm. Its function is as follows. Regulates transcription of the cecR-ybhGFSR operon and the rhlE gene, which altogether are involved in the control of sensitivity to cefoperazone and chloramphenicol. Represses the cecR-ybhGFSR operon and activates the rhlE operon. Acts by binding to a palindromic sequence within the intergenic spacer located between these two divergently transcribed operons. This Shigella flexneri protein is HTH-type transcriptional dual regulator CecR.